Here is a 546-residue protein sequence, read N- to C-terminus: Immunoglobulin heavy constant epsilon (546 aa).

Topologically, residues 1–499 (ASTQSPSVFP…EAPWTWTGLC (499 aa)) are extracellular. Ig-like domains lie at 6–103 (PSVF…KTFS), 112–210 (PTVK…KKCA), 214–318 (PRGV…TKTS), and 324–423 (PEVY…RAVS). Cystine bridges form between C15/C105, C29/C85, C135/C193, C239/C299, and C345/C405. N-linked (GlcNAc...) asparagine glycosylation is found at N21, N49, N99, N146, N252, N264, and N275. A helical transmembrane segment spans residues 500–520 (IFAALFLLSVSYSAAITLLMV). The Cytoplasmic segment spans residues 521–546 (QRFLSATRQGRPQTSLDYTNVLQPHA).

In terms of assembly, the basic structural unit of both sIgE and mIgE molecules consists of two identical heavy chains and two identical light chains; disulfide-linked. N-terminal variable regions of the heavy and light chains form the antigen binding sites, whereas the C-terminal constant regions of the heavy chains interact with immune receptors to mediate effector functions. Part of IgE antibody. Interacts (via CH3) with the alpha chain/FCE1RA of IgE Fc receptor complex. Interacts (via CH3 region) with FCER2 (via C-type lectin domain); this interaction regulates IgE homeostasis. As to quaternary structure, part of IgE B cell antigen receptor complex (BCR). The BCR complex consists of one mIgE molecule responsible for antigen binding, non-covalently associated with CD79A and CD79B signaling chains. As to expression, expressed in B lymphocytes stimulated with IL4 and CD40.

The protein resides in the secreted. It localises to the cell membrane. In terms of biological role, constant region of immunoglobulin heavy chains. Immunoglobulins, also known as antibodies, are membrane-bound or secreted glycoproteins produced by B lymphocytes. In the recognition phase of humoral immunity, the membrane-bound immunoglobulins serve as receptors which, upon binding of a specific antigen, trigger the clonal expansion and differentiation of B lymphocytes into immunoglobulins-secreting plasma cells. Secreted immunoglobulins mediate the effector phase of humoral immunity, which results in the elimination of bound antigens. The antigen binding site is formed by the variable domain of one heavy chain, together with that of its associated light chain. Thus, each immunoglobulin has two antigen binding sites with remarkable affinity for a particular antigen. The variable domains are assembled by a process called V-(D)-J rearrangement and can then be subjected to somatic hypermutations which, after exposure to antigen and selection, allow affinity maturation for a particular antigen. Functionally, constant region of secreted IgE, also known as the Fc region of IgE antibody. Mediates IgE effector functions on myeloid and lymphoid cells primarily via two Fc receptors, the high-affinity IgE Fc receptor complex/FCER1A:MS4A2:FCGR1A and the low-affinity FCER2 receptor, which upon antigen/allergen cross-linking initiate signaling pathways that lead to immune cell activation and differentiation. Triggers the immediate hypersensitivity response to allergens as a host defense mechanism against helminth parasites, pathogenic bacteria and venom toxicity. When dysregulated, it can elicit harmful life-threatening allergic and anaphylactic reactions. Stimulates the high-affinity IgE Fc receptor complex/FCER1A:MS4A2:FCGR1A on mast cells, basophils and eosinophils leading to secretion of vasoactive amines, lipid mediators and cytokines that contribute to inflammatory response, tissue remodeling and cytotoxicity against microbes. On macrophages, cross-linking of FCER2 by IgE immune complexes induces intracellular killing of parasites through activation of L-Arginine-nitric oxide pathway. Activates macrophages to kill tumor cells via antigen-specific antibody-dependent cytotoxicity (ADCC). Triggers differentiation of quiescent M0 macrophages toward M1 state and reprograms M2 macrophages toward a proinflammatory state with antitumor functions. Stimulates FCER2 on B cells and initiates IgE-dependent antigen uptake and presentation to T cells. Its function is as follows. Constant region of membrane-bound IgE (long mIgE), part of the B cell receptor complex (BCR). Upon antigen cross-linking triggers quick BCR signaling, ensuring survival of IgE-switched B cells and differentiation into plasma cells, thus regulating both primary and memory IgE responses. Constant region of membrane-bound IgE (short mIgE), part of the B cell receptor complex (BCR). Upon antigen cross-linking initiates slower but sustained BCR signaling that negatively regulates mature B cell proliferation. The chain is Immunoglobulin heavy constant epsilon from Homo sapiens (Human).